The primary structure comprises 418 residues: Trans-acting enoyl reductase (418 aa).

Belongs to the saccharopine dehydrogenase family. Enoyl reductase subfamily.

Its function is as follows. Involved in the reduction of the double bond between C-4 and C-5 during phthiocerol dimycocerosates (DIM A) and glycosylated phenolphthiocerol dimycocerosates (PGL) biosynthesis. This Mycobacterium leprae (strain TN) protein is Trans-acting enoyl reductase.